We begin with the raw amino-acid sequence, 311 residues long: Pyrimidine-specific ribonucleoside hydrolase RihA (311 aa).

The active site involves His-240.

The protein belongs to the IUNH family. RihA subfamily.

Functionally, hydrolyzes cytidine or uridine to ribose and cytosine or uracil, respectively. This is Pyrimidine-specific ribonucleoside hydrolase RihA from Salmonella choleraesuis (strain SC-B67).